We begin with the raw amino-acid sequence, 242 residues long: MANNGENGRHQEVGHKSLLQSDALYQYILDTSVYPREPEPMKELREITAKHPWNIMTTSADEGQFLSMLIKLINAKNTMEIGVFTGYSSLATAMALPDDGKILAMDINRENYEIGLPVIEKAGLAHKIEFKEGPALPVLDQMIEDGKYHGSYDFIFVDADKDNYLNYHKRLIDLVKVGGLIGYDNTLWNGSVVAPPDAPLRKYVRYYRDFVLELNKALAADPRIEICQLPVGDGITLCRRIS.

Lys16 is a binding site for substrate. S-adenosyl-L-methionine-binding positions include Thr58, Glu80, 82–83 (GV), Ser88, Asp106, and Ala135. Substrate is bound at residue Asp158. Position 158 (Asp158) interacts with a divalent metal cation. Asp160 is a binding site for S-adenosyl-L-methionine. Residues Asp184 and Asn185 each contribute to the a divalent metal cation site. Position 189 (Asn189) interacts with substrate.

The protein belongs to the class I-like SAM-binding methyltransferase superfamily. Cation-dependent O-methyltransferase family. CCoAMT subfamily. Requires a divalent metal cation as cofactor. As to expression, mostly expressed in petal limbs and tubes, and, at low levels, in stems, roots and leaves.

The protein localises to the cytoplasm. It is found in the cytosol. The catalysed reaction is (E)-caffeoyl-CoA + S-adenosyl-L-methionine = (E)-feruloyl-CoA + S-adenosyl-L-homocysteine + H(+). It carries out the reaction (E)-5-hydroxyferuloyl-CoA + S-adenosyl-L-methionine = (E)-sinapoyl-CoA + S-adenosyl-L-homocysteine + H(+). It participates in aromatic compound metabolism; phenylpropanoid biosynthesis. Functionally, involved in the production of floral volatile phenylpropanoids in flowers of fragrant cultivars (e.g. cv. Mitchell and cv. V26) from cinnamic acid, a common precursor with the anthocyanin biosynthesis pathway involved in flower pigmentation. Methylates caffeoyl-CoA to feruloyl-CoA, also able to methylate 5-hydroxyferuloyl-CoA. This chain is Caffeoyl-CoA O-methyltransferase 2, found in Petunia hybrida (Petunia).